The sequence spans 444 residues: Phosphoglucosamine mutase (444 aa).

Serine 102 serves as the catalytic Phosphoserine intermediate. Mg(2+) is bound by residues serine 102, aspartate 241, aspartate 243, and aspartate 245. The residue at position 102 (serine 102) is a Phosphoserine.

This sequence belongs to the phosphohexose mutase family. Mg(2+) is required as a cofactor. Activated by phosphorylation.

The catalysed reaction is alpha-D-glucosamine 1-phosphate = D-glucosamine 6-phosphate. Catalyzes the conversion of glucosamine-6-phosphate to glucosamine-1-phosphate. This Actinobacillus pleuropneumoniae serotype 5b (strain L20) protein is Phosphoglucosamine mutase.